Consider the following 773-residue polypeptide: Molybdenum cofactor sulfurase (773 aa).

N6-(pyridoxal phosphate)lysine is present on lysine 243. Cysteine 410 is an active-site residue. Residues 632–773 (LRLLRQSGQR…LSCGDTVLVE (142 aa)) form the MOSC domain. Serine 731 is modified (phosphoserine).

Belongs to the class-V pyridoxal-phosphate-dependent aminotransferase family. MOCOS subfamily. Pyridoxal 5'-phosphate is required as a cofactor.

It catalyses the reaction Mo-molybdopterin + L-cysteine + AH2 = thio-Mo-molybdopterin + L-alanine + A + H2O. It participates in cofactor biosynthesis; molybdopterin biosynthesis. Sulfurates the molybdenum cofactor. Sulfation of molybdenum is essential for xanthine dehydrogenase (XDH) and aldehyde oxidase (ADO) enzymes in which molybdenum cofactor is liganded by 1 oxygen and 1 sulfur atom in active form. The sequence is that of Molybdenum cofactor sulfurase from Drosophila ananassae (Fruit fly).